Consider the following 440-residue polypeptide: Golgi-associated RAB2 interactor protein 2 (440 aa).

Belongs to the GARIN family. Interacts with CALM1. In terms of tissue distribution, expressed in testis (at protein level).

The protein localises to the cell projection. The protein resides in the cilium. It localises to the flagellum. Seems to play a role in sperm motility. The chain is Golgi-associated RAB2 interactor protein 2 from Mus musculus (Mouse).